Consider the following 1067-residue polypeptide: Dorsal-ventral patterning protein tolloid (1067 aa).

Positions 1-36 (MKGMRLMPMKMKAKLVVLSVGALWMMMFFLVDYAEG) are cleaved as a signal peptide. Positions 37–136 (RRLSQLPESE…NGQPIQRRRR (100 aa)) are excised as a propeptide. The Peptidase M12A domain occupies 136–338 (RAVTVRKERT…VQANLLYKCA (203 aa)). A glycan (N-linked (GlcNAc...) asparagine) is linked at N176. 5 cysteine pairs are disulfide-bonded: C179/C337, C201/C223, C203/C204, C340/C390, and C417/C439. Residue H231 participates in Zn(2+) binding. E232 is a catalytic residue. Residues H235 and H241 each coordinate Zn(2+). 2 short sequence motifs (cell attachment site) span residues 245-247 (RGD) and 325-327 (RGD). CUB domains are found at residues 340-477 (CGRT…FEVV) and 478-591 (CGGD…LMLD). N-linked (GlcNAc...) asparagine glycosylation is present at N441. 6 disulfide bridges follow: C478/C505, C532/C554, C595/C606, C602/C615, C617/C630, and C634/C662. N-linked (GlcNAc...) asparagine glycosylation is present at N543. One can recognise an EGF-like 1; calcium-binding domain in the interval 591-631 (DVDECKFTDHGCQHLCINTLGSYQCGCRAGYELQANGKTCE). One can recognise a CUB 3 domain in the interval 634–753 (CGGVVDATKS…SGFVAKFVID (120 aa)). 2 N-linked (GlcNAc...) asparagine glycosylation sites follow: N644 and N677. Cystine bridges form between C693/C716, C757/C768, C764/C777, C779/C792, C797/C823, C850/C872, C910/C940, and C967/C989. The 41-residue stretch at 753 to 793 (DVDECSMNNGGCQHRCRNTFGSYQCSCRNGYTLAENGHNCT) folds into the EGF-like 2; calcium-binding domain. N-linked (GlcNAc...) asparagine glycosylation is present at N791. CUB domains lie at 797–909 (CKFE…FVSE) and 910–1026 (CGGY…FMAV). 2 N-linked (GlcNAc...) asparagine glycosylation sites follow: N864 and N918.

Zn(2+) serves as cofactor.

Functionally, metalloprotease which cleaves TGF-beta family ligands daw, Actbeta and myo in vitro. Cleavage of daw enhances its signaling activity. Cleaves dorsal-ventral patterning protein sog. Processes sog more efficiently than metalloprotease tld which also cleaves sog. Required for normal dorsal development. TLD may interact physically with DPP-C protein. This chain is Dorsal-ventral patterning protein tolloid (tld), found in Drosophila melanogaster (Fruit fly).